Here is a 149-residue protein sequence, read N- to C-terminus: MKCPFCGFEESKVVDSRSTDDNTTIRRRRECLKCNKRYTTYEKIEDFPILVIKKDLTRENFNKEKIINGLIIACQKRPISRKQIEEIAYDIEKTISNSMLTEIPSNEIGEMVMARLKELDEISYVRFASVYRQFKDIDTFLEEIKNLRT.

A zinc finger lies at 3 to 34; the sequence is CPFCGFEESKVVDSRSTDDNTTIRRRRECLKC. The 91-residue stretch at 49 to 139 folds into the ATP-cone domain; the sequence is ILVIKKDLTR…VYRQFKDIDT (91 aa).

This sequence belongs to the NrdR family. The cofactor is Zn(2+).

Negatively regulates transcription of bacterial ribonucleotide reductase nrd genes and operons by binding to NrdR-boxes. This Clostridium beijerinckii (strain ATCC 51743 / NCIMB 8052) (Clostridium acetobutylicum) protein is Transcriptional repressor NrdR.